The chain runs to 202 residues: Large ribosomal subunit protein uL18 (202 aa).

It belongs to the universal ribosomal protein uL18 family. Part of the 50S ribosomal subunit. Contacts the 5S and 23S rRNAs.

In terms of biological role, this is one of the proteins that bind and probably mediate the attachment of the 5S RNA into the large ribosomal subunit, where it forms part of the central protuberance. This chain is Large ribosomal subunit protein uL18, found in Methanopyrus kandleri (strain AV19 / DSM 6324 / JCM 9639 / NBRC 100938).